The sequence spans 139 residues: Putative pre-16S rRNA nuclease (139 aa).

It belongs to the YqgF nuclease family.

It localises to the cytoplasm. Functionally, could be a nuclease involved in processing of the 5'-end of pre-16S rRNA. This Dictyoglomus thermophilum (strain ATCC 35947 / DSM 3960 / H-6-12) protein is Putative pre-16S rRNA nuclease.